A 127-amino-acid polypeptide reads, in one-letter code: MHLNMLKSKIHRATVVQADLNYVGSITIDRNLMDKANILEYEKVEIANINNGARFETYVIAGEAGSGIICLNGAAARCAQAGDKVIIMCYCSLTPEEASEHRPKVVFVNDDNSISNVTEYEKHGTIG.

The active-site Schiff-base intermediate with substrate; via pyruvic acid is Ser25. Ser25 is subject to Pyruvic acid (Ser). Thr57 lines the substrate pocket. Tyr58 (proton donor) is an active-site residue. Gly73 to Ala75 contacts substrate.

The protein belongs to the PanD family. As to quaternary structure, heterooctamer of four alpha and four beta subunits. Pyruvate is required as a cofactor. Post-translationally, is synthesized initially as an inactive proenzyme, which is activated by self-cleavage at a specific serine bond to produce a beta-subunit with a hydroxyl group at its C-terminus and an alpha-subunit with a pyruvoyl group at its N-terminus.

It is found in the cytoplasm. The catalysed reaction is L-aspartate + H(+) = beta-alanine + CO2. Its pathway is cofactor biosynthesis; (R)-pantothenate biosynthesis; beta-alanine from L-aspartate: step 1/1. Its function is as follows. Catalyzes the pyruvoyl-dependent decarboxylation of aspartate to produce beta-alanine. In Clostridium acetobutylicum (strain ATCC 824 / DSM 792 / JCM 1419 / IAM 19013 / LMG 5710 / NBRC 13948 / NRRL B-527 / VKM B-1787 / 2291 / W), this protein is Aspartate 1-decarboxylase.